The primary structure comprises 721 residues: Tripartite terminase subunit 1 (721 aa).

The C3H1-type zinc-finger motif lies at 189-217; it reads CLKCYEELSLVPNQGKSIRKRLAGKFCNH. 625–632 contributes to the ATP binding site; the sequence is YNDVFGKQ.

This sequence belongs to the herpesviridae TRM1 protein family. As to quaternary structure, associates with TRM2 and TRM3 to form the tripartite terminase complex. Interacts with portal protein.

Its subcellular location is the host nucleus. Functionally, component of the molecular motor that translocates viral genomic DNA in empty capsid during DNA packaging. Forms a tripartite terminase complex together with TRM2 and TRM3 in the host cytoplasm. Once the complex reaches the host nucleus, it interacts with the capsid portal vertex. This portal forms a ring in which genomic DNA is translocated into the capsid. TRM1 carries an endonuclease activity that plays an important role for the cleavage of concatemeric viral DNA into unit length genomes. This chain is Tripartite terminase subunit 1, found in Homo sapiens (Human).